A 332-amino-acid chain; its full sequence is D-amino acid oxidase (332 aa).

10 residues coordinate FAD: Ala-8, Gly-9, Ile-10, Thr-39, Thr-40, Ala-45, Gly-46, Leu-47, Val-161, and Ser-180. The D-proline site is built by Tyr-218 and Arg-274. Residues Tyr-218 and Arg-274 each coordinate D-serine. Residues Arg-274, Gly-305, Gly-306, Gly-308, and Thr-310 each coordinate FAD. Residue Gly-306 coordinates D-proline. Gly-306 contacts D-serine. The Microbody targeting signal signature appears at 330-332 (AKL).

Belongs to the DAMOX/DASOX family. It depends on FAD as a cofactor.

The protein localises to the peroxisome matrix. The enzyme catalyses a D-alpha-amino acid + O2 + H2O = a 2-oxocarboxylate + H2O2 + NH4(+). It catalyses the reaction D-alanine + O2 + H2O = pyruvate + H2O2 + NH4(+). The catalysed reaction is D-arginine + O2 + H2O = 5-guanidino-2-oxopentanoate + H2O2 + NH4(+). It carries out the reaction D-asparagine + O2 + H2O = 2-oxosuccinamate + H2O2 + NH4(+). The enzyme catalyses D-cysteine + O2 + H2O = 2-oxo-3-sulfanylpropanoate + H2O2 + NH4(+). It catalyses the reaction D-glutamine + O2 + H2O = 2-oxoglutaramate + H2O2 + NH4(+). The catalysed reaction is D-isoleucine + O2 + H2O = (R)-3-methyl-2-oxopentanoate + H2O2 + NH4(+). It carries out the reaction D-leucine + O2 + H2O = 4-methyl-2-oxopentanoate + H2O2 + NH4(+). The enzyme catalyses D-lysine + O2 + H2O = 6-amino-2-oxohexanoate + H2O2 + NH4(+). It catalyses the reaction D-methionine + O2 + H2O = 4-methylsulfanyl-2-oxobutanoate + H2O2 + NH4(+). The catalysed reaction is D-phenylalanine + O2 + H2O = 3-phenylpyruvate + H2O2 + NH4(+). It carries out the reaction D-proline + O2 = 1-pyrroline-2-carboxylate + H2O2. The enzyme catalyses D-valine + O2 + H2O = 3-methyl-2-oxobutanoate + H2O2 + NH4(+). It catalyses the reaction D-histidine + O2 + H2O = 3-(imidazol-5-yl)pyruvate + H2O2 + NH4(+). The catalysed reaction is D-tyrosine + O2 + H2O = 3-(4-hydroxyphenyl)pyruvate + H2O2 + NH4(+). It carries out the reaction D-serine + O2 + H2O = 3-hydroxypyruvate + H2O2 + NH4(+). The enzyme catalyses D-threonine + O2 + H2O = (S)-3-hydroxy-2-oxobutanoate + H2O2 + NH4(+). It catalyses the reaction D-tryptophan + O2 + H2O = indole-3-pyruvate + H2O2 + NH4(+). Catalyzes the oxidative deamination of D-amino acids with broad substrate specificity. Could be responsible for the degradation of diet-derived D-alanine in the intestine. Maintains the asexual state of worms and represses early ovarian development. Following sexual induction, the enzyme is required for differentiation of oogonia into oocytes in the developing ovaries. The polypeptide is D-amino acid oxidase (Dugesia ryukyuensis (Freshwater planarian flatworm)).